A 326-amino-acid polypeptide reads, in one-letter code: tRNA-modifying protein YgfZ (326 aa).

Folate contacts are provided by tryptophan 27 and tryptophan 189.

The protein belongs to the tRNA-modifying YgfZ family.

It localises to the cytoplasm. In terms of biological role, folate-binding protein involved in regulating the level of ATP-DnaA and in the modification of some tRNAs. It is probably a key factor in regulatory networks that act via tRNA modification, such as initiation of chromosomal replication. The protein is tRNA-modifying protein YgfZ of Shigella dysenteriae serotype 1 (strain Sd197).